The chain runs to 785 residues: Protein SEY1 (785 aa).

Positions 1–31 (MASAAPINLRAQDTPYVPPTSLPTSSSQTGS) are disordered. The Cytoplasmic segment spans residues 1-689 (MASAAPINLR…KRSTVASIAQ (689 aa)). Positions 22-31 (LPTSSSQTGS) are enriched in low complexity. One can recognise a GB1/RHD3-type G domain in the interval 61 to 281 (GFSYNIVAVF…SSDYLFKPAY (221 aa)). GTP is bound at residue 71–78 (GSQSTGKS). Residues 458–482 (SWEEELELLRDEIRAVADQCRKDET) adopt a coiled-coil conformation. Residues 690–710 (IPYWIYGVLVVLGWNEAMLVL) form a helical membrane-spanning segment. Topologically, residues 711 to 713 (FNP) are lumenal. The chain crosses the membrane as a helical span at residues 714-734 (LYFAFLLLAMATSYIIAQLGL). Residues 735–785 (VGPLFQVTRTVGSEIQRQATARLREHFSQPVLAEPVQVGPSRDREEVGQIQ) lie on the Cytoplasmic side of the membrane.

This sequence belongs to the TRAFAC class dynamin-like GTPase superfamily. GB1/RHD3 GTPase family. RHD3 subfamily.

Its subcellular location is the endoplasmic reticulum membrane. Cooperates with the reticulon proteins and tubule-shaping DP1 family proteins to generate and maintain the structure of the tubular endoplasmic reticulum network. Has GTPase activity, which is required for its function in ER organization. This chain is Protein SEY1, found in Laccaria bicolor (strain S238N-H82 / ATCC MYA-4686) (Bicoloured deceiver).